The primary structure comprises 49 residues: MFRLLLNLLRHRVTYRFLVVLCAALGYASLTGDLSSLESVVCSILTCSD.

Residues 1–23 form the signal peptide; it reads MFRLLLNLLRHRVTYRFLVVLCA.

The polypeptide is Protein 19.5 (Escherichia phage T7 (Bacteriophage T7)).